Reading from the N-terminus, the 380-residue chain is Cobalt-precorrin-5B C(1)-methyltransferase (380 aa).

It belongs to the CbiD family.

It catalyses the reaction Co-precorrin-5B + S-adenosyl-L-methionine = Co-precorrin-6A + S-adenosyl-L-homocysteine. It functions in the pathway cofactor biosynthesis; adenosylcobalamin biosynthesis; cob(II)yrinate a,c-diamide from sirohydrochlorin (anaerobic route): step 6/10. In terms of biological role, catalyzes the methylation of C-1 in cobalt-precorrin-5B to form cobalt-precorrin-6A. The protein is Cobalt-precorrin-5B C(1)-methyltransferase of Methanosphaera stadtmanae (strain ATCC 43021 / DSM 3091 / JCM 11832 / MCB-3).